The chain runs to 346 residues: MNLQGKNVTLHDMSLRDGMHAKRHQISLEQMIAVATGLDAAGMPLIEITHGDGLGGRSINYGFPAHSDEEYLRAVIPRLKQAKVSALLLPGIGTVDHLKMALDCGVSTIRVATHCTEADVSEQHIGMSRKLGADTVGFLMMAHMISAEKVLEQARLMESYGANCIYCTDSAGYMLPDEVSEKIGLLRAELNPATEIGFHGHHNMGMAIANSLAAIEAGASRIDGSVAGLGAGAGNTPLEVFVAVCKRMGVETGIDLYKIMDVAEDIVVPMMDQPIRVDRDALTLGYAGVYSSFLLFAQRAEKKYGVPARDILVELGRRGTVGGQEDMIEDLALDMSRARQNQKVSA.

The Pyruvate carboxyltransferase domain occupies 8-260 (VTLHDMSLRD…ETGIDLYKIM (253 aa)). 16-17 (RD) contacts substrate. Position 17 (Asp17) interacts with Mn(2+). The active-site Proton acceptor is the His20. Substrate contacts are provided by Ser170 and His199. His199 and His201 together coordinate Mn(2+). Residue Tyr290 coordinates substrate.

The protein belongs to the 4-hydroxy-2-oxovalerate aldolase family.

The catalysed reaction is (S)-4-hydroxy-2-oxopentanoate = acetaldehyde + pyruvate. The polypeptide is 4-hydroxy-2-oxovalerate aldolase (nahM) (Stutzerimonas stutzeri (Pseudomonas stutzeri)).